Here is a 98-residue protein sequence, read N- to C-terminus: Citrate lyase acyl carrier protein (98 aa).

O-(phosphoribosyl dephospho-coenzyme A)serine is present on serine 14.

Belongs to the CitD family. In terms of assembly, oligomer with a subunit composition of (alpha,beta,gamma)6.

It is found in the cytoplasm. Functionally, covalent carrier of the coenzyme of citrate lyase. This chain is Citrate lyase acyl carrier protein, found in Citrobacter koseri (strain ATCC BAA-895 / CDC 4225-83 / SGSC4696).